The primary structure comprises 256 residues: Acetyl-coenzyme A carboxylase carboxyl transferase subunit alpha (256 aa).

The region spanning 1–236 (MTKITRIVRE…KQELLVELEQ (236 aa)) is the CoA carboxyltransferase C-terminal domain.

Belongs to the AccA family. As to quaternary structure, acetyl-CoA carboxylase is a heterohexamer composed of biotin carboxyl carrier protein (AccB), biotin carboxylase (AccC) and two subunits each of ACCase subunit alpha (AccA) and ACCase subunit beta (AccD).

It localises to the cytoplasm. The catalysed reaction is N(6)-carboxybiotinyl-L-lysyl-[protein] + acetyl-CoA = N(6)-biotinyl-L-lysyl-[protein] + malonyl-CoA. It functions in the pathway lipid metabolism; malonyl-CoA biosynthesis; malonyl-CoA from acetyl-CoA: step 1/1. In terms of biological role, component of the acetyl coenzyme A carboxylase (ACC) complex. First, biotin carboxylase catalyzes the carboxylation of biotin on its carrier protein (BCCP) and then the CO(2) group is transferred by the carboxyltransferase to acetyl-CoA to form malonyl-CoA. In Streptococcus gordonii (strain Challis / ATCC 35105 / BCRC 15272 / CH1 / DL1 / V288), this protein is Acetyl-coenzyme A carboxylase carboxyl transferase subunit alpha.